Consider the following 72-residue polypeptide: Gas vesicle protein A (72 aa).

This sequence belongs to the gas vesicle GvpA family. The gas vesicle shell is 2 nm thick and consists of a single layer of this protein. It forms helical ribs nearly perpendicular to the long axis of the vesicle.

The protein localises to the gas vesicle shell. Functionally, gas vesicles are hollow, gas filled proteinaceous nanostructures found in some microorganisms. During planktonic growth they allow positioning of the organism at a favorable depth for light or nutrient acquisition. GvpA forms the protein shell. The polypeptide is Gas vesicle protein A (Pseudanabaena galeata (strain PCC 6901)).